The primary structure comprises 1149 residues: Structural maintenance of chromosomes protein 6 homolog smc-6 (1149 aa).

Position 77–84 (77–84 (GPNGSGKS)) interacts with ATP. The stretch at 309-460 (LQDETKKEYA…EEEKYTIQRD (152 aa)) forms a coiled coil. Residues 461-687 (INQLRRKIEQ…DVDEGALARL (227 aa)) form a flexible hinge region. Residues 714-920 (YNERDQTKAA…AVDRATVGCD (207 aa)) are a coiled coil. 2 disordered regions span residues 875–900 (NDKK…STTE) and 1026–1060 (EVDE…VRDL). The segment covering 1026–1038 (EVDEHSYDDDSDD) has biased composition (acidic residues). Positions 1042-1058 (PRRKKSKKSGQKKKRVR) are enriched in basic residues.

Belongs to the SMC family. SMC6 subfamily. As to quaternary structure, interacts with smc-5. As to expression, expressed in the germline (at protein level).

The protein localises to the nucleus. It is found in the chromosome. In terms of biological role, core component of the smc-5/smc-6 complex. Involved in DNA double-strand break repair by promoting sister-chromatid homologous recombination during meiosis. Also plays a role in the DNA damage repair of ultraviolet (UV) radiation-induced DNA lesions. Promotes efficient DNA replication. This chain is Structural maintenance of chromosomes protein 6 homolog smc-6, found in Caenorhabditis elegans.